The sequence spans 141 residues: Large ribosomal subunit protein uL14 (141 aa).

The protein belongs to the universal ribosomal protein uL14 family. As to quaternary structure, part of the 50S ribosomal subunit. Forms a cluster with proteins L3 and L24e, part of which may contact the 16S rRNA in 2 intersubunit bridges.

Functionally, binds to 23S rRNA. Forms part of two intersubunit bridges in the 70S ribosome. The protein is Large ribosomal subunit protein uL14 of Pyrococcus abyssi (strain GE5 / Orsay).